Reading from the N-terminus, the 636-residue chain is Threonine--tRNA ligase (636 aa).

The TGS domain occupies 1-61 (MLKITLKDGS…NENCEVEILS (61 aa)). The tract at residues 244–534 (EHRKLGKELD…LIEHYEGKFP (291 aa)) is catalytic. Zn(2+) is bound by residues cysteine 335, histidine 386, and histidine 511.

This sequence belongs to the class-II aminoacyl-tRNA synthetase family. Homodimer. Zn(2+) is required as a cofactor.

It localises to the cytoplasm. The enzyme catalyses tRNA(Thr) + L-threonine + ATP = L-threonyl-tRNA(Thr) + AMP + diphosphate + H(+). In terms of biological role, catalyzes the attachment of threonine to tRNA(Thr) in a two-step reaction: L-threonine is first activated by ATP to form Thr-AMP and then transferred to the acceptor end of tRNA(Thr). Also edits incorrectly charged L-seryl-tRNA(Thr). This is Threonine--tRNA ligase from Natranaerobius thermophilus (strain ATCC BAA-1301 / DSM 18059 / JW/NM-WN-LF).